The following is a 447-amino-acid chain: GTPase Der (447 aa).

2 consecutive EngA-type G domains span residues 4–165 (QIIA…PKEK) and 180–357 (VQIV…KNWN). GTP is bound by residues 10-17 (GRPNVGKS), 57-61 (DTPGL), 119-122 (NKCE), 186-193 (GRPNAGKS), 233-237 (DTAGL), and 298-301 (NKWD). Residues 358–443 (KKITTSKLNE…PIRFAYVKTK (86 aa)) form the KH-like domain.

It belongs to the TRAFAC class TrmE-Era-EngA-EngB-Septin-like GTPase superfamily. EngA (Der) GTPase family. Associates with the 50S ribosomal subunit.

Its function is as follows. GTPase that plays an essential role in the late steps of ribosome biogenesis. This is GTPase Der from Rickettsia canadensis (strain McKiel).